We begin with the raw amino-acid sequence, 258 residues long: Imidazole glycerol phosphate synthase subunit HisF (258 aa).

Residues Asp12 and Asp131 contribute to the active site.

It belongs to the HisA/HisF family. As to quaternary structure, heterodimer of HisH and HisF.

The protein resides in the cytoplasm. It carries out the reaction 5-[(5-phospho-1-deoxy-D-ribulos-1-ylimino)methylamino]-1-(5-phospho-beta-D-ribosyl)imidazole-4-carboxamide + L-glutamine = D-erythro-1-(imidazol-4-yl)glycerol 3-phosphate + 5-amino-1-(5-phospho-beta-D-ribosyl)imidazole-4-carboxamide + L-glutamate + H(+). It participates in amino-acid biosynthesis; L-histidine biosynthesis; L-histidine from 5-phospho-alpha-D-ribose 1-diphosphate: step 5/9. Its function is as follows. IGPS catalyzes the conversion of PRFAR and glutamine to IGP, AICAR and glutamate. The HisF subunit catalyzes the cyclization activity that produces IGP and AICAR from PRFAR using the ammonia provided by the HisH subunit. This is Imidazole glycerol phosphate synthase subunit HisF from Pseudarthrobacter chlorophenolicus (strain ATCC 700700 / DSM 12829 / CIP 107037 / JCM 12360 / KCTC 9906 / NCIMB 13794 / A6) (Arthrobacter chlorophenolicus).